The primary structure comprises 197 residues: Casparian strip membrane protein 3 (197 aa).

At 1–35 the chain is on the cytoplasmic side; the sequence is MSARVDIPADTSAAAKGTAPLIAASTHVKGGYKKG. A helical membrane pass occupies residues 36–56; the sequence is LAIFDLVLRLGAVVTALAAAA. The Extracellular portion of the chain corresponds to 57–85; that stretch reads TMGTTDQTLPFFTQFFQFQASYDDLPTFQ. The chain crosses the membrane as a helical span at residues 86-106; it reads FFVIAMAIVSGYLVLSLPFSI. The Cytoplasmic portion of the chain corresponds to 107 to 119; sequence VAIIRPHATGPRL. A helical membrane pass occupies residues 120–140; sequence LLIILDTVALTLNTAAAAAAV. The Extracellular portion of the chain corresponds to 141–171; that stretch reads AIVDLAQNGNSSANWLGICQQFGDFCQKASG. Asn150 is a glycosylation site (N-linked (GlcNAc...) asparagine). Residues 172 to 192 form a helical membrane-spanning segment; the sequence is AVVASFIAAGVLLFLIVISAL. Residues 193–197 lie on the Cytoplasmic side of the membrane; that stretch reads ALRKR.

This sequence belongs to the Casparian strip membrane proteins (CASP) family. Homodimer and heterodimers.

It localises to the cell membrane. Regulates membrane-cell wall junctions and localized cell wall deposition. Required for establishment of the Casparian strip membrane domain (CSD) and the subsequent formation of Casparian strips, a cell wall modification of the root endodermis that determines an apoplastic barrier between the intraorganismal apoplasm and the extraorganismal apoplasm and prevents lateral diffusion. This chain is Casparian strip membrane protein 3, found in Populus trichocarpa (Western balsam poplar).